Here is a 660-residue protein sequence, read N- to C-terminus: Bifunctional polymyxin resistance protein ArnA (660 aa).

The interval 1–304 (MKAVIFAYHD…TLGLVAGACL (304 aa)) is formyltransferase ArnAFT. The active-site Proton donor; for formyltransferase activity is H104. Residues R114 and 136–140 (VKRAD) contribute to the (6R)-10-formyltetrahydrofolate site. Positions 314-660 (RRIRVLILGV…RSVDIAERAS (347 aa)) are dehydrogenase ArnADH. NAD(+) contacts are provided by residues D347 and 368 to 369 (DI). UDP-alpha-D-glucuronate-binding positions include A393, Y398, and 432–433 (TS). E434 serves as the catalytic Proton acceptor; for decarboxylase activity. UDP-alpha-D-glucuronate-binding positions include R460, N492, 526-535 (KLIDGGQQKR), and Y613. The Proton donor; for decarboxylase activity role is filled by R619.

In the N-terminal section; belongs to the Fmt family. UDP-L-Ara4N formyltransferase subfamily. It in the C-terminal section; belongs to the NAD(P)-dependent epimerase/dehydratase family. UDP-glucuronic acid decarboxylase subfamily. In terms of assembly, homohexamer, formed by a dimer of trimers.

The enzyme catalyses UDP-alpha-D-glucuronate + NAD(+) = UDP-beta-L-threo-pentopyranos-4-ulose + CO2 + NADH. The catalysed reaction is UDP-4-amino-4-deoxy-beta-L-arabinose + (6R)-10-formyltetrahydrofolate = UDP-4-deoxy-4-formamido-beta-L-arabinose + (6S)-5,6,7,8-tetrahydrofolate + H(+). The protein operates within nucleotide-sugar biosynthesis; UDP-4-deoxy-4-formamido-beta-L-arabinose biosynthesis; UDP-4-deoxy-4-formamido-beta-L-arabinose from UDP-alpha-D-glucuronate: step 1/3. Its pathway is nucleotide-sugar biosynthesis; UDP-4-deoxy-4-formamido-beta-L-arabinose biosynthesis; UDP-4-deoxy-4-formamido-beta-L-arabinose from UDP-alpha-D-glucuronate: step 3/3. It participates in bacterial outer membrane biogenesis; lipopolysaccharide biosynthesis. Its function is as follows. Bifunctional enzyme that catalyzes the oxidative decarboxylation of UDP-glucuronic acid (UDP-GlcUA) to UDP-4-keto-arabinose (UDP-Ara4O) and the addition of a formyl group to UDP-4-amino-4-deoxy-L-arabinose (UDP-L-Ara4N) to form UDP-L-4-formamido-arabinose (UDP-L-Ara4FN). The modified arabinose is attached to lipid A and is required for resistance to polymyxin and cationic antimicrobial peptides. The sequence is that of Bifunctional polymyxin resistance protein ArnA from Salmonella paratyphi A (strain ATCC 9150 / SARB42).